Here is a 101-residue protein sequence, read N- to C-terminus: Small ribosomal subunit protein uS14 (101 aa).

The protein belongs to the universal ribosomal protein uS14 family. As to quaternary structure, part of the 30S ribosomal subunit. Contacts proteins S3 and S10.

Binds 16S rRNA, required for the assembly of 30S particles and may also be responsible for determining the conformation of the 16S rRNA at the A site. The chain is Small ribosomal subunit protein uS14 from Dechloromonas aromatica (strain RCB).